We begin with the raw amino-acid sequence, 204 residues long: Putative 3-methyladenine DNA glycosylase (204 aa).

The protein belongs to the DNA glycosylase MPG family.

This chain is Putative 3-methyladenine DNA glycosylase, found in Bacillus cytotoxicus (strain DSM 22905 / CIP 110041 / 391-98 / NVH 391-98).